Reading from the N-terminus, the 559-residue chain is Nucleoprotein (559 aa).

Residues 53-235 (MRKEKRTDSD…ITQEQSQINI (183 aa)) form a binding site for the cap structure m7GTP region. Residues D378 and E380 each coordinate Mn(2+). The Zn(2+) site is built by E388, C495, H498, and C519. A Mn(2+)-binding site is contributed by D523.

This sequence belongs to the arenaviridae nucleocapsid protein family. As to quaternary structure, homomultimerizes to form the nucleocapsid. Binds to viral genomic RNA. Interacts with glycoprotein G2. Interacts with protein Z; this interaction probably directs the encapsidated genome to budding sites. Interacts with protein L; this interaction does not interfere with Z-L interaction. Interacts with host IKBKE (via Protein kinase domain); the interaction inhibits IKBKE kinase activity.

It localises to the virion. The protein resides in the host cytoplasm. Its function is as follows. Encapsidates the genome, protecting it from nucleases. The encapsidated genomic RNA is termed the nucleocapsid (NC). Serves as template for viral transcription and replication. The increased presence of protein N in host cell does not seem to trigger the switch from transcription to replication as observed in other negative strain RNA viruses. Through the interaction with host IKBKE, strongly inhibits the phosphorylation and nuclear translocation of host IRF3, a protein involved in interferon activation pathway, leading to the inhibition of interferon-beta and IRF3-dependent promoters activation. Also encodes a functional 3'-5' exoribonuclease that degrades preferentially dsRNA substrates and thereby participates in the suppression of interferon induction. The chain is Nucleoprotein from Sooretamys angouya (Paraguayan rice rat).